A 257-amino-acid chain; its full sequence is V-type proton ATPase subunit D (257 aa).

The disordered stretch occupies residues 215 to 257 (KEQEAAQKALEGPGPGEDAAHSENNPPRNLLASEEDNLPVLFN).

Belongs to the V-ATPase D subunit family. V-ATPase is a heteromultimeric enzyme made up of two complexes: the ATP-hydrolytic V1 complex and the proton translocation V0 complex. The V1 complex consists of three catalytic AB heterodimers that form a heterohexamer, three peripheral stalks each consisting of EG heterodimers, one central rotor including subunits D and F, and the regulatory subunits C and H. The proton translocation complex V0 consists of the proton transport subunit a, a ring of proteolipid subunits c9c'', rotary subunit d, subunits e and f, and the accessory subunits vah-19/Ac45 and vah-20/PRR.

Subunit of the V1 complex of vacuolar(H+)-ATPase (V-ATPase), a multisubunit enzyme composed of a peripheral complex (V1) that hydrolyzes ATP and a membrane integral complex (V0) that translocates protons. V-ATPase is responsible for acidifying and maintaining the pH of intracellular compartments and in some cell types, is targeted to the plasma membrane, where it is responsible for acidifying the extracellular environment. The chain is V-type proton ATPase subunit D from Caenorhabditis elegans.